Consider the following 87-residue polypeptide: Toxin Cll4 (87 aa).

The signal sequence occupies residues 1 to 19 (MNSLLMITACLALIGTVWA). One can recognise an LCN-type CS-alpha/beta domain in the interval 20–85 (KEGYIVNYHD…VWPLPKKRCN (66 aa)). 4 disulfides stabilise this stretch: cysteine 31/cysteine 84, cysteine 35/cysteine 60, cysteine 44/cysteine 65, and cysteine 48/cysteine 67. Asparagine amide is present on asparagine 85.

This sequence belongs to the long (4 C-C) scorpion toxin superfamily. Sodium channel inhibitor family. Beta subfamily. Expressed by the venom gland.

It localises to the secreted. In terms of biological role, beta toxins bind voltage-independently at site-4 of sodium channels (Nav) and shift the voltage of activation toward more negative potentials thereby affecting sodium channel activation and promoting spontaneous and repetitive firing. This is Toxin Cll4 from Centruroides limpidus (Mexican scorpion).